The following is a 307-amino-acid chain: Ribosomal protein L11 methyltransferase (307 aa).

Residues Thr162, Gly183, Asp205, and Asn244 each contribute to the S-adenosyl-L-methionine site.

The protein belongs to the methyltransferase superfamily. PrmA family.

The protein localises to the cytoplasm. It catalyses the reaction L-lysyl-[protein] + 3 S-adenosyl-L-methionine = N(6),N(6),N(6)-trimethyl-L-lysyl-[protein] + 3 S-adenosyl-L-homocysteine + 3 H(+). In terms of biological role, methylates ribosomal protein L11. This Bordetella bronchiseptica (strain ATCC BAA-588 / NCTC 13252 / RB50) (Alcaligenes bronchisepticus) protein is Ribosomal protein L11 methyltransferase.